A 356-amino-acid polypeptide reads, in one-letter code: Histidinol-phosphate aminotransferase (356 aa).

An N6-(pyridoxal phosphate)lysine modification is found at K214.

This sequence belongs to the class-II pyridoxal-phosphate-dependent aminotransferase family. Histidinol-phosphate aminotransferase subfamily. In terms of assembly, homodimer. Requires pyridoxal 5'-phosphate as cofactor.

It carries out the reaction L-histidinol phosphate + 2-oxoglutarate = 3-(imidazol-4-yl)-2-oxopropyl phosphate + L-glutamate. It functions in the pathway amino-acid biosynthesis; L-histidine biosynthesis; L-histidine from 5-phospho-alpha-D-ribose 1-diphosphate: step 7/9. This chain is Histidinol-phosphate aminotransferase, found in Escherichia coli O1:K1 / APEC.